Here is a 171-residue protein sequence, read N- to C-terminus: Adenine phosphoribosyltransferase (171 aa).

This sequence belongs to the purine/pyrimidine phosphoribosyltransferase family. Homodimer.

It is found in the cytoplasm. It catalyses the reaction AMP + diphosphate = 5-phospho-alpha-D-ribose 1-diphosphate + adenine. Its pathway is purine metabolism; AMP biosynthesis via salvage pathway; AMP from adenine: step 1/1. Catalyzes a salvage reaction resulting in the formation of AMP, that is energically less costly than de novo synthesis. The sequence is that of Adenine phosphoribosyltransferase from Prochlorococcus marinus (strain MIT 9515).